The chain runs to 169 residues: uncharacterized protein (169 aa).

This is an uncharacterized protein from Saccharomyces cerevisiae (strain ATCC 204508 / S288c) (Baker's yeast).